The following is a 131-amino-acid chain: Small ribosomal subunit protein uS8 (131 aa).

The protein belongs to the universal ribosomal protein uS8 family. Part of the 30S ribosomal subunit. Contacts proteins S5 and S12.

Its function is as follows. One of the primary rRNA binding proteins, it binds directly to 16S rRNA central domain where it helps coordinate assembly of the platform of the 30S subunit. In Paraburkholderia phymatum (strain DSM 17167 / CIP 108236 / LMG 21445 / STM815) (Burkholderia phymatum), this protein is Small ribosomal subunit protein uS8.